Here is a 258-residue protein sequence, read N- to C-terminus: MKEILITNDDGYESEGLKKLIKMLTKEFKAKITIVAPASEKSACSHSITLTKPLRFVKVGKRFYKLDDGTPADCVYLALHALYKKRLPDLVISGINKGANVGEDITYSGTCAGAMEAVLQGIPAIALSQFYKKSEKELDYKNALQITKKIIQNIFDKGFPLEKKEFLNINFPAKSKIKGIKICKAGKRVYNFEAYSNVNPRGVEYYWLAAANLDFEDEKNSDIALLKKGYATITPIMLDLTAYERMKKVKKWLKANDE.

Positions 9, 10, 42, and 96 each coordinate a divalent metal cation.

The protein belongs to the SurE nucleotidase family. It depends on a divalent metal cation as a cofactor.

The protein localises to the cytoplasm. It carries out the reaction a ribonucleoside 5'-phosphate + H2O = a ribonucleoside + phosphate. Nucleotidase that shows phosphatase activity on nucleoside 5'-monophosphates. The protein is 5'-nucleotidase SurE of Campylobacter jejuni subsp. jejuni serotype O:23/36 (strain 81-176).